Consider the following 183-residue polypeptide: Dual-action ribosomal maturation protein DarP (183 aa).

This sequence belongs to the DarP family.

It is found in the cytoplasm. In terms of biological role, member of a network of 50S ribosomal subunit biogenesis factors which assembles along the 30S-50S interface, preventing incorrect 23S rRNA structures from forming. Promotes peptidyl transferase center (PTC) maturation. This Escherichia coli O7:K1 (strain IAI39 / ExPEC) protein is Dual-action ribosomal maturation protein DarP.